We begin with the raw amino-acid sequence, 303 residues long: Cysteine synthase B (303 aa).

Lys41 is modified (N6-(pyridoxal phosphate)lysine). Residues Asn71, 174–178, and Ser255 contribute to the pyridoxal 5'-phosphate site; that span reads GTTGT.

This sequence belongs to the cysteine synthase/cystathionine beta-synthase family. Pyridoxal 5'-phosphate is required as a cofactor.

The catalysed reaction is O-acetyl-L-serine + hydrogen sulfide = L-cysteine + acetate. The protein operates within amino-acid biosynthesis; L-cysteine biosynthesis; L-cysteine from L-serine: step 2/2. Its function is as follows. Two cysteine synthase enzymes are found. Both catalyze the same reaction. Cysteine synthase B can also use thiosulfate in place of sulfide to give cysteine thiosulfonate as a product. The chain is Cysteine synthase B (cysM) from Salmonella typhimurium (strain LT2 / SGSC1412 / ATCC 700720).